A 206-amino-acid chain; its full sequence is HTH-type transcriptional regulator BetI (206 aa).

One can recognise an HTH tetR-type domain in the interval 8-68; it reads PLRRKALVDA…ETIRSLLRDL (61 aa). A DNA-binding region (H-T-H motif) is located at residues 31–50; the sequence is TMSDIAREAGVSAALAHHYF.

Its pathway is amine and polyamine biosynthesis; betaine biosynthesis via choline pathway [regulation]. Functionally, repressor involved in the biosynthesis of the osmoprotectant glycine betaine. It represses transcription of the choline transporter BetT and the genes of BetAB involved in the synthesis of glycine betaine. In Agrobacterium fabrum (strain C58 / ATCC 33970) (Agrobacterium tumefaciens (strain C58)), this protein is HTH-type transcriptional regulator BetI.